Reading from the N-terminus, the 188-residue chain is Elongation factor P (188 aa).

The protein belongs to the elongation factor P family.

The protein resides in the cytoplasm. The protein operates within protein biosynthesis; polypeptide chain elongation. Involved in peptide bond synthesis. Stimulates efficient translation and peptide-bond synthesis on native or reconstituted 70S ribosomes in vitro. Probably functions indirectly by altering the affinity of the ribosome for aminoacyl-tRNA, thus increasing their reactivity as acceptors for peptidyl transferase. The sequence is that of Elongation factor P from Natranaerobius thermophilus (strain ATCC BAA-1301 / DSM 18059 / JW/NM-WN-LF).